The following is a 439-amino-acid chain: Chaperone SurA (439 aa).

An N-terminal signal peptide occupies residues 1 to 27; it reads MRRISSRLSLVLFAALSCATALFPAHA. 2 consecutive PpiC domains span residues 180-281 and 293-391; these read GEEF…KLLD and LEQT…QVEA.

The protein resides in the periplasm. The enzyme catalyses [protein]-peptidylproline (omega=180) = [protein]-peptidylproline (omega=0). Functionally, chaperone involved in the correct folding and assembly of outer membrane proteins. Recognizes specific patterns of aromatic residues and the orientation of their side chains, which are found more frequently in integral outer membrane proteins. May act in both early periplasmic and late outer membrane-associated steps of protein maturation. The chain is Chaperone SurA from Aromatoleum aromaticum (strain DSM 19018 / LMG 30748 / EbN1) (Azoarcus sp. (strain EbN1)).